A 457-amino-acid chain; its full sequence is Mannose-6-phosphate isomerase (457 aa).

The Zn(2+) site is built by Gln108, His110, Glu135, and His292. Arg311 is an active-site residue.

It belongs to the mannose-6-phosphate isomerase type 1 family. Zn(2+) is required as a cofactor.

The protein localises to the cytoplasm. The enzyme catalyses D-mannose 6-phosphate = D-fructose 6-phosphate. The protein operates within nucleotide-sugar biosynthesis; GDP-alpha-D-mannose biosynthesis; alpha-D-mannose 1-phosphate from D-fructose 6-phosphate: step 1/2. Involved in the synthesis of the GDP-mannose and dolichol-phosphate-mannose required for a number of critical mannosyl transfer reactions. The protein is Mannose-6-phosphate isomerase (pmi1) of Aspergillus fumigatus (strain ATCC MYA-4609 / CBS 101355 / FGSC A1100 / Af293) (Neosartorya fumigata).